The following is a 923-amino-acid chain: Neuropilin-1a (923 aa).

The first 19 residues, 1–19, serve as a signal peptide directing secretion; the sequence is MHCGLVLILFTGIFLIVSA. Topologically, residues 20-856 are extracellular; the sequence is LKNDKCGDNI…AGNMLKTLDP (837 aa). 3 cysteine pairs are disulfide-bonded: cysteine 25-cysteine 52, cysteine 80-cysteine 102, and cysteine 145-cysteine 171. CUB domains follow at residues 25–139 and 145–263; these read CGDN…YEIF and CSRN…FTVL. Asparagine 148 carries an N-linked (GlcNAc...) asparagine glycan. Glutamate 193, aspartate 207, and aspartate 248 together coordinate Ca(2+). Residues cysteine 204 and cysteine 226 are joined by a disulfide bond. N-linked (GlcNAc...) asparagine glycosylation occurs at asparagine 259. Intrachain disulfides connect cysteine 273–cysteine 422 and cysteine 429–cysteine 581. F5/8 type C domains follow at residues 273–422 and 429–581; these read CTEP…VYGC and CSGM…LLGC. The N-linked (GlcNAc...) asparagine glycan is linked to asparagine 520. The disordered stretch occupies residues 587 to 624; the sequence is TVPPTTPAASTTPSDECDDDQANCHSGTGDGYDQTGGT. O-linked (Xyl...) (chondroitin sulfate) serine; alternate glycosylation is present at serine 612. Serine 612 carries O-linked (Xyl...) (heparan sulfate) serine; alternate glycosylation. The MAM domain maps to 642–811; it reads FACDFGWAND…DNVNMADCKD (170 aa). A helical membrane pass occupies residues 857-877; that stretch reads ILITIIAMSALGVFLGAICGV. Residues 878-923 lie on the Cytoplasmic side of the membrane; sequence VLYCACSHSGMSDRNLSALENYNFELVDGVKLKKDKLNSQNSYSEA.

This sequence belongs to the neuropilin family.

The protein resides in the membrane. Receptor involved in the development of the cardiovascular system, in angiogenesis, in the formation of certain neuronal circuits and in organogenesis outside the nervous system. It mediates the chemorepulsant activity of semaphorins. Regulates angiogenesis through a VEGF-dependent pathway. This is Neuropilin-1a (nrp1a) from Danio rerio (Zebrafish).